Consider the following 100-residue polypeptide: MRLSPVEKEKLFLFMAGELAKQRMDRGLKLNYPEAVAILSCYVLEGAREGKSVSELMKDGKHVLSTEDVMEGVPEMLEEIQVEATFPDGVKLVTIHEPIQ.

Belongs to the urease gamma subunit family. Heterotrimer of UreA (gamma), UreB (beta) and UreC (alpha) subunits. Three heterotrimers associate to form the active enzyme.

It localises to the cytoplasm. It catalyses the reaction urea + 2 H2O + H(+) = hydrogencarbonate + 2 NH4(+). Its pathway is nitrogen metabolism; urea degradation; CO(2) and NH(3) from urea (urease route): step 1/1. The sequence is that of Urease subunit gamma from Halalkalibacterium halodurans (strain ATCC BAA-125 / DSM 18197 / FERM 7344 / JCM 9153 / C-125) (Bacillus halodurans).